The following is a 969-amino-acid chain: MMNRFRKWLYKPKRSDPQLLAQFYYADEELNQVATELDSLDGRKDPQRCTLLVNQFRSCQDNVLNIINQIMDECIPEERANRDFCVKFPEEIRHDNLAGQLWFGAECLAAGSIIMNREIESMAMRPLAKDLTRSLEEVRNITRDQALRDLNHYTERIKEALRHFDGLFAEFELSYVSAMVPVKSPKEYYIQQEVIVLFCETVERALKLEYLTQDMIDDYEPALMFTIPRLAIVCGLVIYSEGPLNLDRKPEDMSELFRPFRTLLRKIRDLLQTLTEEELMTLERSLCISQDGEFPTSSTNDPSASTGPDSQTEELEKEKGVEEVVDLTLFVTQEDSVWKEEEEKQVLPESSSESEEEEPIDADLACSMQYDEEEIEQLNMMVHQVGDEMSTLLSPPSQNQSPAHRPRPYNGSSLEGSSATSSTQASPRRAPGSYHDDDRVFFMDDLESGLSSELCRGQLPLPTVCLRSPEGSSCNGWLTVCQSSDATNLGCQRKLSQSTESVGNSDRMVNGWEGLQDEDSVQTAEEIANRTGGMKLSATVIFNPHSPSLSDLAVVLPQSADAPEGGEGGALVATQCLLNSCVCCAGGCVDNHEDAMEPAGRSMALGFEKHKLTITSSVIQSAVAAGSPGKGNGHLPLTLPPSQGHLTHSVPNCSVQNQAREDEGSQDGIHYPCCEKCSPGVLLAQDRGSGHEGGPSCTLQDTGCQTQHNASVKGRSECFGKQSKDDNRKINSSSQESPLSSVPSSDIDGVSVTTCSLSSSYAPSPVSSLTTSSDMSEDLDHQEIQVALQAAKLAAHNKIRSRFHSSSDLIHRLFVCISGVADQLQTNYASDLRSILKTLFEVMATKTDQGDNEKPKKGPCLGSAVLEDCALCQETISSSELAAKAREGQFEDPPEWVPDEACNSCIACKAPFTVIRRKHHCRSCGKIFCSRCSSHSAPLPRYGQMKPVRVCTHCYMFHVTPFYSDRTGI.

K87 participates in a covalent cross-link: Glycyl lysine isopeptide (Lys-Gly) (interchain with G-Cter in ubiquitin). 4 disordered regions span residues 290-323, 336-360, 390-437, and 715-777; these read QDGE…GVEE, SVWK…EEPI, STLL…YHDD, and RSEC…DMSE. Positions 295 to 310 are enriched in polar residues; sequence PTSSTNDPSASTGPDS. Residues 336–346 show a composition bias toward basic and acidic residues; it reads SVWKEEEEKQV. Residues 391–402 are compositionally biased toward polar residues; the sequence is TLLSPPSQNQSP. Low complexity predominate over residues 411 to 423; sequence GSSLEGSSATSST. Residues 715–729 are compositionally biased toward basic and acidic residues; that stretch reads RSECFGKQSKDDNRK. Composition is skewed to low complexity over residues 732–745 and 756–769; these read SSSQ…VPSS and SLSS…VSSL. Residues 899–959 form an FYVE-type zinc finger; it reads DEACNSCIAC…VCTHCYMFHV (61 aa). Residues C905, C908, C921, C924, C929, C932, C951, and C954 each coordinate Zn(2+).

This sequence belongs to the lst-2 family. Monoubiquitination at Lys-87 prevents binding to phosphatidylinositol 3-phosphate (PI3P) and localization to early endosome membranes.

Its subcellular location is the cytoplasm. It is found in the cytosol. The protein resides in the early endosome membrane. Functionally, negative regulator of epidermal growth factor receptor (EGFR) signaling. Acts by promoting EGFR degradation in endosomes when not monoubiquitinated. The polypeptide is Lateral signaling target protein 2 homolog (zfyve28) (Danio rerio (Zebrafish)).